Here is a 1009-residue protein sequence, read N- to C-terminus: Serine/threonine-protein phosphatase BSL2 homolog (1009 aa).

Residues 1 to 48 are disordered; that stretch reads MDVDSRMTTESDSDSDAAAQGGGGGGFGSETSSASPSAPGTPTAMGAG. Residues 29-45 are compositionally biased toward low complexity; that stretch reads SETSSASPSAPGTPTAM. Kelch repeat units follow at residues 136-182, 240-288, 293-344, 349-396, and 417-463; these read SSAG…VATA, FLLT…TASA, LLLL…FVNA, SGGA…DAAG, and MIYV…IQAG. The interval 549 to 572 is disordered; that stretch reads QVNGEAEHSPDREQSPDATPSVKQ. Residues 553-563 show a composition bias toward basic and acidic residues; sequence EAEHSPDREQS. The Mn(2+) site is built by aspartate 711, histidine 713, aspartate 745, and asparagine 777. Histidine 778 functions as the Proton donor in the catalytic mechanism. Residues histidine 830 and histidine 909 each contribute to the Mn(2+) site. Positions 984-1009 are disordered; sequence NANRPPTPTRGRPQAANNDRGSLAWI.

It belongs to the PPP phosphatase family. BSU subfamily. Mn(2+) is required as a cofactor.

It localises to the nucleus. It catalyses the reaction O-phospho-L-seryl-[protein] + H2O = L-seryl-[protein] + phosphate. It carries out the reaction O-phospho-L-threonyl-[protein] + H2O = L-threonyl-[protein] + phosphate. This chain is Serine/threonine-protein phosphatase BSL2 homolog (BSL2), found in Oryza sativa subsp. japonica (Rice).